Reading from the N-terminus, the 103-residue chain is MFAVIKTGGKQYSVAADDIITVMTLQGEPGDAVTFDSVLMLAGEGEPKIGAPFIAGATVSGEIVEQTRGPKVISFKKRRRQNSKRKRGHRQDLTLVKITGINA.

It belongs to the bacterial ribosomal protein bL21 family. Part of the 50S ribosomal subunit. Contacts protein L20.

This protein binds to 23S rRNA in the presence of protein L20. The protein is Large ribosomal subunit protein bL21 of Beijerinckia indica subsp. indica (strain ATCC 9039 / DSM 1715 / NCIMB 8712).